The following is a 507-amino-acid chain: Variant surface glycoprotein ILTAT 1.25 (507 aa).

A signal peptide spans 1–21 (MQSQQQPVFISIILLAINTDA). The segment covering 83 to 95 (EPEAAPKESRSDE) has biased composition (basic and acidic residues). The disordered stretch occupies residues 83-102 (EPEAAPKESRSDETPEACKA). N141 and N371 each carry an N-linked (GlcNAc...) asparagine glycan. Low complexity predominate over residues 384–395 (PTKQPPAKAAAA). The tract at residues 384–474 (PTKQPPAKAA…KKEEECKSPN (91 aa)) is disordered. Over residues 396 to 420 (PEKKSNPQKDCNKNTKKRDCKEGDG) the composition is skewed to basic and acidic residues. Residues 444-455 (SAAGAGDAGASD) show a composition bias toward low complexity. The segment covering 456–474 (TEAKKCSDKKKEEECKSPN) has biased composition (basic and acidic residues). D484 carries GPI-anchor amidated aspartate lipidation. Residues 485–507 (SSILANKQFALSVASAAFVALLF) constitute a propeptide, removed in mature form.

Its subcellular location is the cell membrane. Functionally, VSG forms a coat on the surface of the parasite. The trypanosome evades the immune response of the host by expressing a series of antigenically distinct VSGs from an estimated 1000 VSG genes. The chain is Variant surface glycoprotein ILTAT 1.25 from Trypanosoma brucei brucei.